We begin with the raw amino-acid sequence, 86 residues long: Small ribosomal subunit protein bS20 (86 aa).

Basic residues predominate over residues 1-27 (MANSKSAKKRATQAERRRQHNASRRSM). Residues 1–28 (MANSKSAKKRATQAERRRQHNASRRSMM) are disordered.

Belongs to the bacterial ribosomal protein bS20 family.

Functionally, binds directly to 16S ribosomal RNA. The sequence is that of Small ribosomal subunit protein bS20 from Aliivibrio salmonicida (strain LFI1238) (Vibrio salmonicida (strain LFI1238)).